A 398-amino-acid chain; its full sequence is Cholinephosphotransferase 1 (398 aa).

An N-acetylalanine modification is found at Ala-2. The Cytoplasmic segment spans residues Ala-2–Ala-62. A helical transmembrane segment spans residues Pro-63–Phe-83. Asn-64 lines the CDP-choline pocket. The Lumenal segment spans residues Tyr-84 to Pro-93. Residues Tyr-94 to Ala-118 traverse the membrane as a helical segment. Residues Asp-111 and Asp-114 each contribute to the Mg(2+) site. Arg-119 is a binding site for CDP-choline. Over Arg-119–Ser-125 the chain is Cytoplasmic. A helical membrane pass occupies residues Pro-126–Ala-150. Asp-132 serves as a coordination point for Mg(2+). His-133 acts as the Proton acceptor in catalysis. Asp-136 lines the Mg(2+) pocket. Residues Val-151–Leu-160 lie on the Lumenal side of the membrane. The chain crosses the membrane as a helical span at residues Phe-161 to Tyr-179. The Cytoplasmic segment spans residues Val-180–Asp-190. Residues Val-191–Phe-207 form a helical membrane-spanning segment. Topologically, residues Gly-208–Ile-222 are lumenal. A helical membrane pass occupies residues Lys-223–Leu-248. Residues His-249–Leu-265 are Cytoplasmic-facing. A helical transmembrane segment spans residues Ser-266–Ile-281. Topologically, residues Tyr-282 to His-293 are lumenal. The helical transmembrane segment at Pro-294–His-316 threads the bilayer. Over Met-317–Phe-329 the chain is Cytoplasmic. The helical transmembrane segment at Ile-330–Gln-339 threads the bilayer. The Lumenal segment spans residues Tyr-340 to Asp-346. Residues Glu-347 to His-376 traverse the membrane as a helical segment. The Cytoplasmic segment spans residues Leu-377–Asp-398.

Belongs to the CDP-alcohol phosphatidyltransferase class-I family. It depends on Mg(2+) as a cofactor. Requires Mn(2+) as cofactor.

It localises to the golgi apparatus membrane. It catalyses the reaction CDP-choline + a 1,2-diacyl-sn-glycerol = a 1,2-diacyl-sn-glycero-3-phosphocholine + CMP + H(+). It carries out the reaction 1-octadecanoyl-2-(5Z,8Z,11Z,14Z-eicosatetraenoyl)-sn-glycerol + CDP-choline = 1-octadecanoyl-2-(5Z,8Z,11Z,14Z-eicosatetraenoyl)-sn-glycero-3-phosphocholine + CMP + H(+). The enzyme catalyses 1-hexadecanoyl-2-(9Z-octadecenoyl)-sn-glycerol + CDP-choline = 1-hexadecanoyl-2-(9Z-octadecenoyl)-sn-glycero-3-phosphocholine + CMP + H(+). The catalysed reaction is 1-hexadecanoyl-2-(4Z,7Z,10Z,13Z,16Z,19Z-docosahexaenoyl)-sn-glycerol + CDP-choline = 1-hexadecanoyl-2-(4Z,7Z,10Z,13Z,16Z,19Z-docosahexaenoyl)-sn-glycero-3-phosphocholine + CMP + H(+). It catalyses the reaction 1,2-dioctanoyl-sn-glycerol + CDP-choline = 1,2-dioctanoyl-sn-glycero-3-phosphocholine + CMP + H(+). It participates in phospholipid metabolism; phosphatidylcholine biosynthesis; phosphatidylcholine from phosphocholine: step 2/2. Catalyzes the final step of de novo phosphatidylcholine (PC) synthesis, i.e. the transfer of choline phosphate from CDP-choline to the free hydroxyl of a diacylglycerol (DAG), producing a PC. It thereby plays a central role in the formation and maintenance of vesicular membranes. The polypeptide is Cholinephosphotransferase 1 (Rattus norvegicus (Rat)).